We begin with the raw amino-acid sequence, 267 residues long: Undecaprenyl-diphosphatase (267 aa).

7 consecutive transmembrane segments (helical) span residues 1-21 (MSLFTLFLLALVQGITEFLPI), 40-60 (GQAIDVAVHVGTLGAVILYFW), 85-105 (LAFLLIIATIPVIIFGLFLEV), 112-132 (LRSIAVIGWTMLIFGLVLYWA), 189-209 (AMLMSIPTIIATGVFAGAEVI), 219-239 (DGAIAAALSFLAALAALTLMF), and 245-265 (VSFTPYVIYRVILGVILLVIA).

This sequence belongs to the UppP family.

Its subcellular location is the cell inner membrane. The enzyme catalyses di-trans,octa-cis-undecaprenyl diphosphate + H2O = di-trans,octa-cis-undecaprenyl phosphate + phosphate + H(+). Catalyzes the dephosphorylation of undecaprenyl diphosphate (UPP). Confers resistance to bacitracin. In Jannaschia sp. (strain CCS1), this protein is Undecaprenyl-diphosphatase.